A 403-amino-acid polypeptide reads, in one-letter code: Argininosuccinate synthase (403 aa).

ATP is bound by residues 12 to 20 (AYSGGLDTS) and alanine 39. Tyrosine 91 is a binding site for L-citrulline. Glycine 121 serves as a coordination point for ATP. L-aspartate-binding residues include threonine 123, asparagine 127, and aspartate 128. An L-citrulline-binding site is contributed by asparagine 127. L-citrulline-binding residues include arginine 131, serine 180, serine 189, glutamate 265, and tyrosine 277.

Belongs to the argininosuccinate synthase family. Type 1 subfamily. As to quaternary structure, homotetramer.

It is found in the cytoplasm. The enzyme catalyses L-citrulline + L-aspartate + ATP = 2-(N(omega)-L-arginino)succinate + AMP + diphosphate + H(+). It functions in the pathway amino-acid biosynthesis; L-arginine biosynthesis; L-arginine from L-ornithine and carbamoyl phosphate: step 2/3. In Buchnera aphidicola subsp. Acyrthosiphon pisum (strain 5A), this protein is Argininosuccinate synthase.